A 487-amino-acid chain; its full sequence is Betaine aldehyde dehydrogenase (487 aa).

Residues I27 and D93 each coordinate K(+). G149–W151 contacts NAD(+). K161 (charge relay system) is an active-site residue. NAD(+) contacts are provided by residues K175–E178 and S228–T231. K(+) is bound at residue L243. E249 (proton acceptor) is an active-site residue. The NAD(+) site is built by G251, C283, and E384. Residue C283 is the Nucleophile of the active site. A Cysteine sulfenic acid (-SOH) modification is found at C283. K(+)-binding residues include K454 and G457. The active-site Charge relay system is the E461.

It belongs to the aldehyde dehydrogenase family. Dimer of dimers. The cofactor is K(+).

The catalysed reaction is betaine aldehyde + NAD(+) + H2O = glycine betaine + NADH + 2 H(+). The protein operates within amine and polyamine biosynthesis; betaine biosynthesis via choline pathway; betaine from betaine aldehyde: step 1/1. In terms of biological role, involved in the biosynthesis of the osmoprotectant glycine betaine. Catalyzes the irreversible oxidation of betaine aldehyde to the corresponding acid. The protein is Betaine aldehyde dehydrogenase of Brucella canis (strain ATCC 23365 / NCTC 10854 / RM-666).